A 256-amino-acid polypeptide reads, in one-letter code: Acidic leucine-rich nuclear phosphoprotein 32 family member E (256 aa).

LRR repeat units follow at residues 43-64 (ELEF…PTLS), 65-87 (KLRK…AERC), and 89-110 (NLTY…EALQ). The region spanning 123-161 (CEITNLEDYRDSIFDLLQQITYLDGFDQEDNEAPDSEDD) is the LRRCT domain. The disordered stretch occupies residues 147-256 (GFDQEDNEAP…PEDEGEEEDD (110 aa)). Composition is skewed to acidic residues over residues 148–205 (FDQE…EEEV) and 215–235 (IQDE…EEEA). Positions 204–256 (EVGLSYLMKEEIQDEDDDDDYVEEGGDEEEEAEGIRGEKRKRDPEDEGEEEDD) are ZID domain. Residues 236–247 (EGIRGEKRKRDP) show a composition bias toward basic and acidic residues.

The protein belongs to the ANP32 family. As to quaternary structure, component of a SWR1-like complex. Interacts with H2A.Z/H2AZ1.

It localises to the cytoplasm. It is found in the nucleus. In terms of biological role, histone chaperone that specifically mediates the genome-wide removal of histone H2A.Z/H2AZ1 from the nucleosome: removes H2A.Z/H2AZ1 from its normal sites of deposition, especially from enhancer and insulator regions. Not involved in deposition of H2A.Z/H2AZ1 in the nucleosome. May stabilize the evicted H2A.Z/H2AZ1-H2B dimer, thus shifting the equilibrium towards dissociation and the off-chromatin state. Inhibits activity of protein phosphatase 2A (PP2A). Does not inhibit protein phosphatase 1. May play a role in cerebellar development and synaptogenesis. The protein is Acidic leucine-rich nuclear phosphoprotein 32 family member E (ANP32E) of Gallus gallus (Chicken).